The sequence spans 122 residues: Large ribosomal subunit protein uL14 (122 aa).

Belongs to the universal ribosomal protein uL14 family. Part of the 50S ribosomal subunit. Forms a cluster with proteins L3 and L19. In the 70S ribosome, L14 and L19 interact and together make contacts with the 16S rRNA in bridges B5 and B8.

Binds to 23S rRNA. Forms part of two intersubunit bridges in the 70S ribosome. The polypeptide is Large ribosomal subunit protein uL14 (Mycobacterium ulcerans (strain Agy99)).